We begin with the raw amino-acid sequence, 532 residues long: Flavin-containing monooxygenase 1 (532 aa).

An N-acetylalanine modification is found at Ala2. The Lumenal portion of the chain corresponds to 2-510 (AKRVAIVGAG…ARVVQESPSP (509 aa)). FAD contacts are provided by residues 9 to 13 (GAGVS), Glu32, 40 to 41 (LW), and 61 to 62 (NS). NADP(+) is bound by residues 60–61 (SN) and 195–198 (SGTD). A helical membrane pass occupies residues 511–531 (FESFLKVFSFLALLVAIFLIF). Leu532 is a topological domain (cytoplasmic).

This sequence belongs to the FMO family. It depends on FAD as a cofactor. As to expression, expressed mainly in fetal and adult liver.

The protein resides in the endoplasmic reticulum membrane. The enzyme catalyses hypotaurine + NADPH + O2 + H(+) = taurine + NADP(+) + H2O. It catalyses the reaction hypotaurine + NADH + O2 + H(+) = taurine + NAD(+) + H2O. The catalysed reaction is trimethylamine + NADPH + O2 = trimethylamine N-oxide + NADP(+) + H2O. It carries out the reaction N,N-dimethylaniline + NADPH + O2 + H(+) = N,N-dimethylaniline N-oxide + NADP(+) + H2O. Its function is as follows. Broad spectrum monooxygenase that catalyzes the oxygenation of a wide variety of nitrogen- and sulfur-containing compounds including xenobiotics. Catalyzes the S-oxygenation of hypotaurine to produce taurine, an organic osmolyte involved in cell volume regulation as well as a variety of cytoprotective and developmental processes. In vitro, catalyzes the N-oxygenation of trimethylamine (TMA) to produce trimethylamine N-oxide (TMAO) and could therefore participate to the detoxification of this compound that is generated by the action of gut microbiota from dietary precursors such as choline, choline containing compounds, betaine or L-carnitine. The polypeptide is Flavin-containing monooxygenase 1 (Homo sapiens (Human)).